A 366-amino-acid polypeptide reads, in one-letter code: tRNA 2-selenouridine synthase (366 aa).

Residues 12-135 (FLNDVPMMDA…MRTFLLDTLH (124 aa)) enclose the Rhodanese domain. The active-site S-selanylcysteine intermediate is the cysteine 95.

The protein belongs to the SelU family. Monomer.

It catalyses the reaction 5-methylaminomethyl-2-thiouridine(34) in tRNA + selenophosphate + (2E)-geranyl diphosphate + H2O + H(+) = 5-methylaminomethyl-2-selenouridine(34) in tRNA + (2E)-thiogeraniol + phosphate + diphosphate. It carries out the reaction 5-methylaminomethyl-2-thiouridine(34) in tRNA + (2E)-geranyl diphosphate = 5-methylaminomethyl-S-(2E)-geranyl-thiouridine(34) in tRNA + diphosphate. The enzyme catalyses 5-methylaminomethyl-S-(2E)-geranyl-thiouridine(34) in tRNA + selenophosphate + H(+) = 5-methylaminomethyl-2-(Se-phospho)selenouridine(34) in tRNA + (2E)-thiogeraniol. The catalysed reaction is 5-methylaminomethyl-2-(Se-phospho)selenouridine(34) in tRNA + H2O = 5-methylaminomethyl-2-selenouridine(34) in tRNA + phosphate. Involved in the post-transcriptional modification of the uridine at the wobble position (U34) of tRNA(Lys), tRNA(Glu) and tRNA(Gln). Catalyzes the conversion of 2-thiouridine (S2U-RNA) to 2-selenouridine (Se2U-RNA). Acts in a two-step process involving geranylation of 2-thiouridine (S2U) to S-geranyl-2-thiouridine (geS2U) and subsequent selenation of the latter derivative to 2-selenouridine (Se2U) in the tRNA chain. This is tRNA 2-selenouridine synthase from Pseudomonas syringae pv. syringae (strain B728a).